Consider the following 132-residue polypeptide: Small ribosomal subunit protein uS8c (132 aa).

It belongs to the universal ribosomal protein uS8 family. As to quaternary structure, part of the 30S ribosomal subunit.

The protein resides in the plastid. The protein localises to the chloroplast. Its function is as follows. One of the primary rRNA binding proteins, it binds directly to 16S rRNA central domain where it helps coordinate assembly of the platform of the 30S subunit. This chain is Small ribosomal subunit protein uS8c (rps8), found in Acorus calamus (Sweet flag).